The chain runs to 453 residues: Vacuolar cation/proton exchanger 1b (453 aa).

Residues 1–67 (MPVSRMMMES…LRSLLANLND (67 aa)) are Cytoplasmic-facing. A helical transmembrane segment spans residues 68–85 (VLLTTRLFLLFPAVLLAI). The Extracellular segment spans residues 86-91 (AATYLH). A helical membrane pass occupies residues 92 to 109 (FGQVWVFVLSLIGLVPLA). Residues 110–126 (ERLSFLTEQIAFYTGPT) are Cytoplasmic-facing. A helical membrane pass occupies residues 127–147 (VGGLLNATFGNVTEVIIALLA). Residues 136–171 (GNVTEVIIALLALREGKIEVVKCSLLGSILSNLLLV) form a cation selection region. At 148 to 160 (LREGKIEVVKCSL) the chain is on the extracellular side. Residues 161–181 (LGSILSNLLLVLGTSLFLAGI) form a helical membrane-spanning segment. The Cytoplasmic segment spans residues 182 to 194 (ANLRAHQPYDTKQ). A helical transmembrane segment spans residues 195 to 215 (AHVNTALLMLAVLCHSLPLML). At 216–232 (RYAVTSGDHAIVSGDAA) the chain is on the extracellular side. The chain crosses the membrane as a helical span at residues 233–253 (LHLSRACSILMLIAYLAYLFF). Residues 254 to 283 (QLNTHRQLFEPQQVEDDDDDDLVIAQDDEP) are Cytoplasmic-facing. A helical membrane pass occupies residues 284–304 (VLGFSSAMIWLALMTLLTALL). The Extracellular portion of the chain corresponds to 305 to 327 (SGYVVSTIEAASESWELSVSFIS). Residues 328–348 (IILLPIVGNAAEHAGAVIFAL) form a helical membrane-spanning segment. The tract at residues 335–370 (GNAAEHAGAVIFALKNKMDITLGVSLGSATQISMFV) is cation selection. At 349–364 (KNKMDITLGVSLGSAT) the chain is on the cytoplasmic side. The chain crosses the membrane as a helical span at residues 365–385 (QISMFVVPVSVIVAWTMGIPM). The Extracellular segment spans residues 386-388 (DLD). A helical membrane pass occupies residues 389 to 409 (FNLLETGSLFLAILVTAFTLQ). Residues 410 to 414 (EGESH) lie on the Cytoplasmic side of the membrane. A helical membrane pass occupies residues 415 to 435 (YLKGLILVLCYAVISVCFFVI). Over 436–453 (RRRSAGGTDGVHHLDVIV) the chain is Extracellular.

This sequence belongs to the Ca(2+):cation antiporter (CaCA) (TC 2.A.19) family. Cation/proton exchanger (CAX) subfamily. As to expression, expressed in embryo and roots.

Its subcellular location is the vacuole membrane. In terms of biological role, vacuolar cation/proton exchanger (CAX). Translocates Ca(2+) and other metal ions into vacuoles using the proton gradient formed by H(+)-ATPase and H(+)-pyrophosphatase. This is Vacuolar cation/proton exchanger 1b (CAX1b) from Oryza sativa subsp. japonica (Rice).